The chain runs to 196 residues: Recombination protein RecR (196 aa).

Residues 57-72 (CERCNTFTEAPVCSTC) form a C4-type zinc finger. Residues 80-175 (RQLCVVETPA…SVTRLARGVP (96 aa)) enclose the Toprim domain.

Belongs to the RecR family.

Functionally, may play a role in DNA repair. It seems to be involved in an RecBC-independent recombinational process of DNA repair. It may act with RecF and RecO. This Methylibium petroleiphilum (strain ATCC BAA-1232 / LMG 22953 / PM1) protein is Recombination protein RecR.